Consider the following 339-residue polypeptide: tRNA dimethylallyltransferase (339 aa).

An ATP-binding site is contributed by 33 to 40; the sequence is GPTASGKT. Residue 35 to 40 participates in substrate binding; it reads TASGKT. 2 interaction with substrate tRNA regions span residues 58–61 and 182–186; these read DSLL and QRIQR.

Belongs to the IPP transferase family. In terms of assembly, monomer. Requires Mg(2+) as cofactor.

The enzyme catalyses adenosine(37) in tRNA + dimethylallyl diphosphate = N(6)-dimethylallyladenosine(37) in tRNA + diphosphate. Catalyzes the transfer of a dimethylallyl group onto the adenine at position 37 in tRNAs that read codons beginning with uridine, leading to the formation of N6-(dimethylallyl)adenosine (i(6)A). In Acidithiobacillus ferrooxidans (strain ATCC 23270 / DSM 14882 / CIP 104768 / NCIMB 8455) (Ferrobacillus ferrooxidans (strain ATCC 23270)), this protein is tRNA dimethylallyltransferase.